Consider the following 187-residue polypeptide: MNLQHHFLIAMPALQDPIFRRSVVYICEHNTNGAMGIIVNKPLENLKIEGILEKLKITPEPRDESIRLDKPVMLGGPLAEDRGFILHTPPSNFASSIRISDNTVMTTSRDVLETLGTDKQPSDILVALGYASWEKGQLEQEILDNAWLTAPADLNILFKTPIADRWREAAKLIGVDILTMPGVAGHA.

It belongs to the UPF0301 (AlgH) family.

This Escherichia coli O7:K1 (strain IAI39 / ExPEC) protein is UPF0301 protein YqgE.